We begin with the raw amino-acid sequence, 989 residues long: MSTTSDFQTGERVRVAHQGNPQSSSLQADMDAKKALLSQNLNNGHLTARPPRTTGPGIKYGEKKPKKQKGSDDDDEDYVDETMPSEDEEDFDNNEEDEDDDDYEEEGPRKRKAPSKKKLVYPRENYRREDSETPEPEMKRIRTLSDSSDDEWMTKPRLNGSESPIGNVMRTQMAKRSAASKRKIVIDDESEDDFINDEEISEKGSGKGSEKEESEGSGKDSETEEVTMKQGQSLKAAMAKAQKEQKKKAESDEDWEEDEDDMNADGDETPSDDSDIEERRAKRGETKNQKECREFFNKAKKEDLLQQARINDKIADFVLANRPFEIYGAMVAKMKGVTRGTNAIEAYMEFLEKRGILSRILDDCKDHAHTVTKDFERCTEGPLQLPLLKEGCTLHDYQLIGVKWLIMMYNKDLNAILGDEMGLGKTIQIVAFLSYLKQIGKTGPHLIVVPSSTIENWIGEFHKWCPSIQLLTYYGSQDERKHLRHRVKKQKDHIDVILTTYNMVTSKSDDKKFFKNFSLNYVIYDEGHMLKNCDSERYRGLMKVKGKKKILLTGTPLQNNLIELISLMYFVLSKVFNKYCEDITHLLQHFKQLGPALDTKNKALYQQDRIEEAKAILQPYILRRLKNQVLGSLPSKSEQIIEVEMKKPQKQLYDNIVEALQQSEESGDSYGSLMRLRQAANHPLLRRSEYTDQKLDKIAKMLCLREKAYADKKWQHVSEDLAWLSDIKIHQLCERFRCTSKFLLNEQLALKSGKCEQLDVMLPEIQKKGDKVLIFSQFTSMLDILEVYLNIRGYSYKRLDGQTPVLDRQEMINEFNLSKDLFVFLLSTRAGGLGINLTSANHIIIHDIDFNPYNDKQAEDRCHRMGQEKPVHVTRLVSKGTVEVGMLALAKKKLQLEKQVTDGVKGQLDEDALRELKEEEGGEQCGGRDLSKLLSSAISGRYDDVEDDSGDSKNGIDAEEAAKKEDEAVKEPVEKEQQKEEESQPSTSA.

A disordered region spans residues 1 to 288 (MSTTSDFQTG…RRAKRGETKN (288 aa)). Residues 72–105 (DDDDEDYVDETMPSEDEEDFDNNEEDEDDDDYEE) are compositionally biased toward acidic residues. Over residues 109 to 120 (RKRKAPSKKKLV) the composition is skewed to basic residues. The span at 124 to 140 (ENYRREDSETPEPEMKR) shows a compositional bias: basic and acidic residues. Residues 187-200 (DDESEDDFINDEEI) show a composition bias toward acidic residues. 2 stretches are compositionally biased toward basic and acidic residues: residues 201–221 (SEKGSGKGSEKEESEGSGKDS) and 241–250 (AQKEQKKKAE). The span at 251–276 (SDEDWEEDEDDMNADGDETPSDDSDI) shows a compositional bias: acidic residues. A compositionally biased stretch (basic and acidic residues) spans 277-288 (EERRAKRGETKN). Positions 406-574 (IMMYNKDLNA…ISLMYFVLSK (169 aa)) constitute a Helicase ATP-binding domain. 419–426 (DEMGLGKT) contributes to the ATP binding site. The short motif at 525 to 528 (DEGH) is the DEGH box element. The region spanning 757 to 912 (QLDVMLPEIQ…GVKGQLDEDA (156 aa)) is the Helicase C-terminal domain. Residues 941-989 (RYDDVEDDSGDSKNGIDAEEAAKKEDEAVKEPVEKEQQKEEESQPSTSA) form a disordered region. The span at 950–982 (GDSKNGIDAEEAAKKEDEAVKEPVEKEQQKEEE) shows a compositional bias: basic and acidic residues.

It belongs to the SNF2/RAD54 helicase family.

It localises to the nucleus. Its subcellular location is the chromosome. It carries out the reaction ATP + H2O = ADP + phosphate + H(+). In terms of biological role, DNA helicase that possesses intrinsic ATP-dependent nucleosome-remodeling activity and is both required for DNA repair and heterochromatin organization. Promotes DNA end resection of double-strand breaks (DSBs) following DNA damage: probably acts by weakening histone DNA interactions in nucleosomes flanking DSBs. The polypeptide is SWI/SNF-related matrix-associated actin-dependent regulator of chromatin subfamily A containing DEAD/H box 1 homolog (Caenorhabditis elegans).